Reading from the N-terminus, the 140-residue chain is Large ribosomal subunit protein uL16 (140 aa).

Positions 1-17 (MPLMPKRVKHRKMHRGS) are enriched in basic residues. Positions 1–21 (MPLMPKRVKHRKMHRGSRSGN) are disordered.

It belongs to the universal ribosomal protein uL16 family. As to quaternary structure, part of the 50S ribosomal subunit.

Binds 23S rRNA and is also seen to make contacts with the A and possibly P site tRNAs. This is Large ribosomal subunit protein uL16 from Akkermansia muciniphila (strain ATCC BAA-835 / DSM 22959 / JCM 33894 / BCRC 81048 / CCUG 64013 / CIP 107961 / Muc).